A 330-amino-acid polypeptide reads, in one-letter code: mRNA-capping enzyme (330 aa).

The active-site N6-GMP-lysine intermediate is the Lys-82.

It belongs to the eukaryotic GTase family. Monomer. Requires Mg(2+) as cofactor. The cofactor is Mn(2+).

The enzyme catalyses a 5'-end diphospho-ribonucleoside in mRNA + GTP + H(+) = a 5'-end (5'-triphosphoguanosine)-ribonucleoside in mRNA + diphosphate. Functionally, mRNA capping. Transfers a GMP cap onto the end of mRNA that terminates with a 5'-diphosphate tail. This is mRNA-capping enzyme from Chlorella (PBCV-1).